The chain runs to 602 residues: Elongation factor 4 (602 aa).

In terms of domain architecture, tr-type G spans 8–189 (KNIRNFSIIA…KIITTIPAPS (182 aa)). GTP is bound by residues 20 to 25 (DHGKST) and 136 to 139 (NKID).

It belongs to the TRAFAC class translation factor GTPase superfamily. Classic translation factor GTPase family. LepA subfamily.

It is found in the cell inner membrane. The catalysed reaction is GTP + H2O = GDP + phosphate + H(+). Its function is as follows. Required for accurate and efficient protein synthesis under certain stress conditions. May act as a fidelity factor of the translation reaction, by catalyzing a one-codon backward translocation of tRNAs on improperly translocated ribosomes. Back-translocation proceeds from a post-translocation (POST) complex to a pre-translocation (PRE) complex, thus giving elongation factor G a second chance to translocate the tRNAs correctly. Binds to ribosomes in a GTP-dependent manner. The chain is Elongation factor 4 from Helicobacter pylori (strain G27).